Reading from the N-terminus, the 185-residue chain is Neuronal vesicle trafficking-associated protein 1 (185 aa).

Residues 1 to 82 (MVKLGNNFSE…ITEGVSERFK (82 aa)) are Cytoplasmic-facing. Residues 83 to 103 (VTVLVLFALAFLTCVVFLVVY) form a helical; Signal-anchor for type II membrane protein membrane-spanning segment. Residues 104 to 185 (KVYKYDHTCP…QETEAAEKSA (82 aa)) are Lumenal-facing.

It belongs to the NSG family.

The protein resides in the membrane. Its subcellular location is the golgi apparatus. It is found in the trans-Golgi network membrane. The protein localises to the endosome membrane. It localises to the cell projection. The protein resides in the dendrite. Its subcellular location is the early endosome membrane. It is found in the late endosome membrane. The protein localises to the lysosome lumen. It localises to the recycling endosome membrane. The protein resides in the cytoplasmic vesicle membrane. Its subcellular location is the golgi stack membrane. It is found in the endosome. The protein localises to the multivesicular body membrane. Its function is as follows. Plays a role in the recycling mechanism in neurons of multiple receptors and acts at the level of early endosomes to promote sorting of receptors toward a recycling pathway. This is Neuronal vesicle trafficking-associated protein 1 from Gallus gallus (Chicken).